Reading from the N-terminus, the 54-residue chain is UPF0181 protein PM0480 (54 aa).

It belongs to the UPF0181 family.

The protein is UPF0181 protein PM0480 of Pasteurella multocida (strain Pm70).